Here is a 485-residue protein sequence, read N- to C-terminus: Protein DETOXIFICATION 14 (485 aa).

The next 12 helical transmembrane spans lie at 30-50 (LSYIAGPMIAVNSSMYVLQVI), 68-88 (IAVSFCSVTGFSVVFGLASAL), 112-132 (IVSLFLVCIPLSLLWTYIGDI), 147-167 (GKFATWLIPALFGYATLQPLV), 175-195 (LILPLVMSSVSSLCIHIVLCW), 207-227 (GAAIAIGVSYWLNVTVLGLYM), 259-279 (ASMICLEWWSFEFLVLLSGIL), 288-308 (VLSVCLSTQSSLYQIPESLGA), 329-349 (AVYTAMVITGVESIMVGAIVF), 372-392 (MAPLLSLSVIFDALHAALSGV), 405-425 (VNLAAYYLFGIPTAILLAFGF), and 432-452 (LWIGITVGSCVQAVLLGLIVI).

It belongs to the multi antimicrobial extrusion (MATE) (TC 2.A.66.1) family.

The protein resides in the membrane. The protein is Protein DETOXIFICATION 14 of Arabidopsis thaliana (Mouse-ear cress).